The sequence spans 95 residues: Aspartyl/glutamyl-tRNA(Asn/Gln) amidotransferase subunit C (95 aa).

It belongs to the GatC family. In terms of assembly, heterotrimer of A, B and C subunits.

The catalysed reaction is L-glutamyl-tRNA(Gln) + L-glutamine + ATP + H2O = L-glutaminyl-tRNA(Gln) + L-glutamate + ADP + phosphate + H(+). The enzyme catalyses L-aspartyl-tRNA(Asn) + L-glutamine + ATP + H2O = L-asparaginyl-tRNA(Asn) + L-glutamate + ADP + phosphate + 2 H(+). Allows the formation of correctly charged Asn-tRNA(Asn) or Gln-tRNA(Gln) through the transamidation of misacylated Asp-tRNA(Asn) or Glu-tRNA(Gln) in organisms which lack either or both of asparaginyl-tRNA or glutaminyl-tRNA synthetases. The reaction takes place in the presence of glutamine and ATP through an activated phospho-Asp-tRNA(Asn) or phospho-Glu-tRNA(Gln). This is Aspartyl/glutamyl-tRNA(Asn/Gln) amidotransferase subunit C from Rhodopseudomonas palustris (strain BisB5).